The following is a 266-amino-acid chain: MKLSLSPPPYADAPVVVLISGLGGSGSYWLPQLAVLDQEYQVVCYDQRGTGNNPDTLAEDYSIAQMAAELHQALVAAGIERYAVVGHALGALVGMQLALDYPASVTVLVSVNGWLRINAHTRRCFQVREQLLHSGGAQAWVEALPLFLYPADWMAARAPRLEAEDALALAHFQGKNNLLRRLNALKRADFSHHADRIRCPVQIICASDDLLVPTACSSELHAALPDSQKMVMRYGGHACNVTDPETFNALLLNGLASLLHHREAAL.

It belongs to the AB hydrolase superfamily. Hydrolase RutD family.

It carries out the reaction carbamate + 2 H(+) = NH4(+) + CO2. Functionally, involved in pyrimidine catabolism. May facilitate the hydrolysis of carbamate, a reaction that can also occur spontaneously. In Escherichia coli O127:H6 (strain E2348/69 / EPEC), this protein is Putative carbamate hydrolase RutD.